The chain runs to 475 residues: Arginine biosynthesis bifunctional protein ArgJ 1, mitochondrial (475 aa).

Residues threonine 204, lysine 233, threonine 244, glutamate 331, asparagine 470, and threonine 475 each coordinate substrate. Threonine 244 serves as the catalytic Nucleophile.

The protein belongs to the ArgJ family. Heterodimer of an alpha and a beta chain. Post-translationally, the alpha and beta chains are autoproteolytically processed from a single precursor protein within the mitochondrion.

The protein resides in the mitochondrion matrix. It carries out the reaction N(2)-acetyl-L-ornithine + L-glutamate = N-acetyl-L-glutamate + L-ornithine. It catalyses the reaction L-glutamate + acetyl-CoA = N-acetyl-L-glutamate + CoA + H(+). It participates in amino-acid biosynthesis; L-arginine biosynthesis; L-ornithine and N-acetyl-L-glutamate from L-glutamate and N(2)-acetyl-L-ornithine (cyclic): step 1/1. The protein operates within amino-acid biosynthesis; L-arginine biosynthesis; N(2)-acetyl-L-ornithine from L-glutamate: step 1/4. Catalyzes two activities which are involved in the cyclic version of arginine biosynthesis: the synthesis of acetylglutamate from glutamate and acetyl-CoA, and of ornithine by transacetylation between acetylornithine and glutamate. This Botryotinia fuckeliana (strain B05.10) (Noble rot fungus) protein is Arginine biosynthesis bifunctional protein ArgJ 1, mitochondrial.